The following is a 784-amino-acid chain: MAQKMDCGAGLLGFQAEASVEDSTLLMQTLMEAIQISEAPPTNQATAAASGPNASPQSSQPPSANEVADIQALAAATKPKTAFKAQNATTKGPNAAYDFSQALNAKEIPSTPPTVAFKAPNAPSKGPNAAYDFSQAATTSELTAKPEMAFKAQNATTKVGPNATYNFSPSLNANEMVNTQPKTAFKAWNDTTKAPTAETQTQNINQAKMATSQADIEADPGPGICESDGAAAQTSADGSQAQNLESRTIIRGKRTRKINNLNVEESSSGDQRRAPLAPGTWRSAPVPITTQSPPGAPPNVLWQTPLAWQNPSGWQNQPARQTPPARQSPPARQTPPAWQNPVAWQNPVIWPNPVIWQNPVIWPNPIVWPGPVVWPNPLAWQNPPGWQTPPGWQTPPGWQGPPDWQGPPDWPLPPDWPLPPDWPLPTDWPLPPDWIPTDWPVPPDWQNLRPSPNLRPSPNSRASQNLGASQPRDVALLQERANKLVKYLMLKDYTKVPIKRSEMLRDIIREYTDVYPEIIERACFVLEKKFGIQLKEIDKEEHLYILISTPESLAGILGTTKDTPKLGLLLVILGVIFMNGNRASEAVLWEALRKMGLRPGVRHPLLGDLRKLLTYEFVKQKYLDYRRVPNSNPPEYEFLWGLRSYHETSKMKVLRFIAEVQKRDPRDWTAQFMEAADEALDALDAAAAEAEARAEARTRMGIGDEAVSGPWSWDDIEFELLTWDEEGDFGDPWSRIPFTFWARYHQNARSRFPQTFAGPIIGPGGTASANFAANFGAIGFFWVE.

Residues 41 to 67 (PTNQATAAASGPNASPQSSQPPSANEV) are disordered. Residues 47–65 (AAASGPNASPQSSQPPSAN) are compositionally biased toward low complexity. Tyr-97 carries the phosphotyrosine modification. Composition is skewed to polar residues over residues 195-214 (PTAE…TSQA), 232-246 (AQTS…NLES), 259-269 (NNLNVEESSSG), and 306-320 (LAWQ…QPAR). The segment at 195–339 (PTAETQTQNI…PARQTPPAWQ (145 aa)) is disordered. Tandem repeats lie at residues 302–307 (WQTPLA), 308–313 (WQNPSG), 314–319 (WQNQPA), 338–343 (WQNPVA), 344–349 (WQNPVI), 350–355 (WPNPVI), 356–361 (WQNPVI), 362–367 (WPNPIV), 368–373 (WPGPVV), 374–379 (WPNPLA), 380–385 (WQNPPG), 386–391 (WQTPPG), 392–397 (WQTPPG), 398–403 (WQGPPD), 404–409 (WQGPPD), 410–415 (WPLPPD), 416–421 (WPLPPD), 422–427 (WPLPTD), and 428–433 (WPLPPD). Residues 302 to 450 (WQTPLAWQNP…VPPDWQNLRP (149 aa)) form a 22 X 6 AA tandem repeats of W-[PQ]-X-P-X-X region. A disordered region spans residues 379-418 (AWQNPPGWQTPPGWQTPPGWQGPPDWQGPPDWPLPPDWPL). The span at 383 to 403 (PPGWQTPPGWQTPPGWQGPPD) shows a compositional bias: low complexity. A compositionally biased stretch (pro residues) spans 404-418 (WQGPPDWPLPPDWPL). One copy of the 20; approximate repeat lies at 434–438 (WIPTD). 2 tandem repeats follow at residues 439-444 (WPVPPD) and 445-450 (WQNLRP). The disordered stretch occupies residues 441-471 (VPPDWQNLRPSPNLRPSPNSRASQNLGASQP). The span at 447-461 (NLRPSPNLRPSPNSR) shows a compositional bias: low complexity. The MAGE domain occupies 477-675 (LQERANKLVK…RDWTAQFMEA (199 aa)).

In terms of assembly, interacts with DLX5, DLX7 and MSX2 and forms homomultimers. Interacts with UNC5A. Interacts with TRIM28 and PJA1. Interacts with NGFR/p75NTR and RORA.

It localises to the cytoplasm. It is found in the cell membrane. The protein localises to the nucleus. Involved in the apoptotic response after nerve growth factor (NGF) binding in neuronal cells. Inhibits cell cycle progression, and facilitates NGFR-mediated apoptosis. May act as a regulator of the function of DLX family members. May enhance ubiquitin ligase activity of RING-type zinc finger-containing E3 ubiquitin-protein ligases. Proposed to act through recruitment and/or stabilization of the Ubl-conjugating enzyme (E2) at the E3:substrate complex. Plays a role in the circadian rhythm regulation. May act as RORA co-regulator, modulating the expression of core clock genes such as BMAL1 and NFIL3, induced, or NR1D1, repressed. This chain is Melanoma-associated antigen D1 (MAGED1), found in Sus scrofa (Pig).